We begin with the raw amino-acid sequence, 89 residues long: MSITPERKAQLIKEFAGKDGDTGSPEVQVAILTERIVNLTEHFRGHAKDNHSRRGLLKMVSQRRSLLDYVKKKDQARYEKLISRLGIRR.

This sequence belongs to the universal ribosomal protein uS15 family. Part of the 30S ribosomal subunit. Forms a bridge to the 50S subunit in the 70S ribosome, contacting the 23S rRNA.

Its function is as follows. One of the primary rRNA binding proteins, it binds directly to 16S rRNA where it helps nucleate assembly of the platform of the 30S subunit by binding and bridging several RNA helices of the 16S rRNA. In terms of biological role, forms an intersubunit bridge (bridge B4) with the 23S rRNA of the 50S subunit in the ribosome. The sequence is that of Small ribosomal subunit protein uS15 from Parvibaculum lavamentivorans (strain DS-1 / DSM 13023 / NCIMB 13966).